The sequence spans 477 residues: Probable periplasmic serine endoprotease DegP-like (477 aa).

The signal sequence occupies residues 1-27 (MSIPRLKSYLMMFAAVLMLGQVLTAQA). Catalysis depends on charge relay system residues His117, Asp147, and Ser220. Substrate-binding positions include 218 to 220 (GNS) and 275 to 279 (LGVVI). PDZ domains lie at 264 to 355 (LKKD…IRNG) and 361 to 466 (DISV…LRQG).

Belongs to the peptidase S1C family.

Its subcellular location is the periplasm. The catalysed reaction is Acts on substrates that are at least partially unfolded. The cleavage site P1 residue is normally between a pair of hydrophobic residues, such as Val-|-Val.. Functionally, might be efficient in the degradation of transiently denatured and unfolded proteins which accumulate in the periplasm following stress conditions. The chain is Probable periplasmic serine endoprotease DegP-like from Pseudomonas putida (strain ATCC 700007 / DSM 6899 / JCM 31910 / BCRC 17059 / LMG 24140 / F1).